A 400-amino-acid polypeptide reads, in one-letter code: Zinc finger protein 514 (400 aa).

A KRAB domain is found at 1-72; the sequence is MTFEDVAVEF…EREISTGAHS (72 aa). 7 consecutive C2H2-type zinc fingers follow at residues 204 to 226, 232 to 254, 260 to 282, 288 to 310, 316 to 338, 344 to 366, and 372 to 394; these read CKCN…QRCH, YECS…QRTH, YECS…YRFH, YKCN…QRTH, YECR…YRFH, YKCN…YRFH, and YKCN…QRSH.

This sequence belongs to the krueppel C2H2-type zinc-finger protein family.

Its subcellular location is the nucleus. In terms of biological role, may be involved in transcriptional regulation. The chain is Zinc finger protein 514 (ZNF514) from Homo sapiens (Human).